Here is a 468-residue protein sequence, read N- to C-terminus: Ubiquitin carboxyl-terminal hydrolase MINDY-1 (468 aa).

Positions 1–19 (MEQPQTENPAPSKATSAET) are enriched in polar residues. The tract at residues 1–105 (MEQPQTENPA…RPQELPQSPR (105 aa)) is disordered. Over residues 22–41 (SENHEALSGPEKHPQDKDGA) the composition is skewed to basic and acidic residues. The span at 43 to 54 (ADGAAGEQEPGD) shows a compositional bias: low complexity. The span at 68–80 (CPPPEASSSPPGP) shows a compositional bias: pro residues. Position 103 is a phosphoserine (Ser103). The active-site Nucleophile is the Cys137. The Proton acceptor role is filled by His319. The segment at 388–427 (QVDQDYLIALSLQQQQQPQGTLGLSDLELAQQLQQEEYQQ) is ubiquitin-binding domain (UBD). Residues 423–432 (EEYQQQQAVQ) show a composition bias toward low complexity. Residues 423 to 468 (EEYQQQQAVQPVRTRAPSPQGRGATSGRPAGERRQRSKTESDCVLL) are disordered. A Phosphoserine modification is found at Ser440. Residues 452–468 (AGERRQRSKTESDCVLL) are compositionally biased toward basic and acidic residues.

Belongs to the MINDY deubiquitinase family. FAM63 subfamily.

It carries out the reaction Thiol-dependent hydrolysis of ester, thioester, amide, peptide and isopeptide bonds formed by the C-terminal Gly of ubiquitin (a 76-residue protein attached to proteins as an intracellular targeting signal).. Functionally, hydrolase that can specifically remove 'Lys-48'-linked conjugated ubiquitin from proteins. Has exodeubiquitinase activity and has a preference for long polyubiquitin chains. May play a regulatory role at the level of protein turnover. The chain is Ubiquitin carboxyl-terminal hydrolase MINDY-1 (Mindy1) from Mus musculus (Mouse).